The chain runs to 158 residues: RING-H2 finger protein ATL66 (158 aa).

The helical transmembrane segment at 33–53 (LFFALALFSVVLFFALLTLYI) threads the bilayer. Residues 107–149 (CCICLGGFEEGEKMKVLPPCSHCYHCECVDRWLKTESSCPLCR) form an RING-type; atypical zinc finger.

The protein belongs to the RING-type zinc finger family. ATL subfamily.

Its subcellular location is the membrane. It carries out the reaction S-ubiquitinyl-[E2 ubiquitin-conjugating enzyme]-L-cysteine + [acceptor protein]-L-lysine = [E2 ubiquitin-conjugating enzyme]-L-cysteine + N(6)-ubiquitinyl-[acceptor protein]-L-lysine.. The protein operates within protein modification; protein ubiquitination. The chain is RING-H2 finger protein ATL66 (ATL66) from Arabidopsis thaliana (Mouse-ear cress).